The primary structure comprises 869 residues: Protein translocase subunit SecA (869 aa).

Residues Q88, 106–110 (GEGKT), and D509 each bind ATP. The segment covering 818–840 (QDEGLKFNQREGEDAPAVREKKI) has biased composition (basic and acidic residues). The interval 818–869 (QDEGLKFNQREGEDAPAVREKKIPRNSPCPCGSGKKYKDCCGKSGPKKGILA) is disordered. The Zn(2+) site is built by C846, C848, C857, and C858.

The protein belongs to the SecA family. In terms of assembly, monomer and homodimer. Part of the essential Sec protein translocation apparatus which comprises SecA, SecYEG and auxiliary proteins SecDF-YajC and YidC. Zn(2+) is required as a cofactor.

Its subcellular location is the cell inner membrane. The protein localises to the cytoplasm. It carries out the reaction ATP + H2O + cellular proteinSide 1 = ADP + phosphate + cellular proteinSide 2.. Its function is as follows. Part of the Sec protein translocase complex. Interacts with the SecYEG preprotein conducting channel. Has a central role in coupling the hydrolysis of ATP to the transfer of proteins into and across the cell membrane, serving as an ATP-driven molecular motor driving the stepwise translocation of polypeptide chains across the membrane. In Campylobacter curvus (strain 525.92), this protein is Protein translocase subunit SecA.